Reading from the N-terminus, the 1341-residue chain is WASH complex subunit 2A (1341 aa).

Residues 1-220 (MMNRTTPDQE…VGSDRGSIVD (220 aa)) form a sufficient for interaction with WASHC3, WASHC4 and WASHC5; required for interaction with WASHC1 region. A compositionally biased stretch (low complexity) spans 202–214 (GELSSEEGSVGSD). Residues 202–405 (GELSSEEGSV…SSSKPGKKIP (204 aa)) are disordered. The segment covering 220 to 232 (DTEEEKEEEESDE) has biased composition (acidic residues). A compositionally biased stretch (basic and acidic residues) spans 233–244 (DFAHHSDNEQNR). Composition is skewed to acidic residues over residues 250–259 (SDEEEDDDGC) and 266–276 (EKEEEDIEDIE). The span at 293 to 307 (LAARIKGDAVGRVDE) shows a compositional bias: basic and acidic residues. Over residues 355 to 366 (GSGGGLFSGGKG) the composition is skewed to gly residues. Residues 356-600 (SGGGLFSGGK…QTLCLQAQRE (245 aa)) form a sufficient for interaction with CCDC93 region. The segment at 356–742 (SGGGLFSGGK…KEAQLGVKSV (387 aa)) is required for interaction with CCDC22 and VPS35L. The segment at 357 to 1341 (GGGLFSGGKG…DDPLNAFGGQ (985 aa)) is interaction with VPS35. Short sequence motifs (LFa) lie at residues 367–378 (LFDDEDEESDLF), 411–419 (VFLGDTDVF), 450–463 (LFDDDDGDDDDDFF), and 482–491 (IFGDEEGDLF). The segment at 422-554 (ASVPSMKEPQ…EDLFSSQSAS (133 aa)) is disordered. Residues 451 to 462 (FDDDDGDDDDDF) show a composition bias toward acidic residues. Residues 507–517 (DENKARAEKKV) show a composition bias toward basic and acidic residues. Polar residues predominate over residues 518–536 (TLSSSKNLKPSSETKTQKG). 3 consecutive short sequence motifs (LFa) follow at residues 537-548 (LFSDEEDSEDLF), 572-583 (LFDDEDEEDNLF), and 617-629 (LFSSDEEDQWNIP). Serine 539 is modified (phosphoserine). Disordered regions lie at residues 621 to 664 (DEED…KTSL), 696 to 739 (DSGG…QLGV), and 751 to 838 (ESLK…KSTG). Residues 637-647 (SDSRSKGEPRD) show a composition bias toward basic and acidic residues. 3 consecutive short sequence motifs (LFa) follow at residues 664-674 (LFEEDEEDDLF), 690-702 (LFEDDVDSGGSLF), and 726-738 (LFSDEEEKEAQLG). Positions 751 to 768 (ESLKFGRTDVAESEKEGL) are enriched in basic and acidic residues. The LFa 11 motif lies at 803–817 (LFDEEEDKMEDQNII). Residues 823-834 (EVGKGRDPDAHP) are compositionally biased toward basic and acidic residues. Short sequence motifs (LFa) lie at residues 839 to 847 (VFQDEELLF), 856 to 862 (DPDVDLF), and 878 to 888 (LFGDDEDDDLF). Disordered regions lie at residues 881–951 (DDED…KEPS) and 988–1205 (FPSS…LEDE). Composition is skewed to basic and acidic residues over residues 898 to 911 (QEKKRVVKKDHSVD) and 917 to 931 (KHPESIQGSKEKGIW). Residues 937–1341 (QDSSGLAPFK…DDPLNAFGGQ (405 aa)) form an interaction with phospholipids region. The segment covering 1028–1046 (NKSRVKMRGKRRPQTRAAR) has biased composition (basic residues). The required for interaction with F-actin-capping protein subunit alpha (CAPZA1 or CAPZA2 or CAPZA3) stretch occupies residues 1029–1047 (KSRVKMRGKRRPQTRAARR). Serine 1054 and serine 1087 each carry phosphoserine. The segment covering 1094 to 1110 (EALAAAAAPWEGGPVPG) has biased composition (low complexity). Residue serine 1114 is modified to Phosphoserine. 6 consecutive short sequence motifs (LFa) follow at residues 1129 to 1136 (LFDSGDIF), 1171 to 1185 (MFPALGEASSDDDLF), 1201 to 1209 (LLEDEDDLF), 1234 to 1240 (IFEDDIF), 1262 to 1270 (LFDDNIDIF), and 1290 to 1299 (IFDDDMDDIF). Residues 1135–1145 (IFSTGTGSQSV) show a composition bias toward polar residues. The interval 1302–1326 (GIQAKTTKPKSRSAQAAPEPRFEHK) is disordered. Positions 1330–1338 (IFDDPLNAF) match the LFa 21 motif.

The protein belongs to the FAM21 family. In terms of assembly, component of the WASH core complex also described as WASH regulatory complex (SHRC) composed of WASH (WASHC1, WASH2P or WASH3P), WASHC2 (WASHC2A or WASHC2C), WASHC3, WASHC4 and WASHC5; in the complex interacts (via N-terminus) directly with WASHC1. The WASH core complex associates with the F-actin-capping protein dimer (formed by CAPZA1, CAPZA2 or CAPZA3 and CAPZB) in a transient or substoichiometric manner which was initially described as WASH complex. Interacts with VPS35; mediates the association with the retromer CSC complex. Interacts with FKBP15. Interacts with CCDC93, CCDC22, VPS35L; indicative for an association of the WASH core complex with the CCC and retriever complexes. Directly interacts with TBC1D23.

The protein localises to the early endosome membrane. It is found in the cell membrane. Its function is as follows. Acts at least in part as component of the WASH core complex whose assembly at the surface of endosomes inhibits WASH nucleation-promoting factor (NPF) activity in recruiting and activating the Arp2/3 complex to induce actin polymerization and is involved in the fission of tubules that serve as transport intermediates during endosome sorting. Mediates the recruitment of the WASH core complex to endosome membranes via binding to phospholipids and VPS35 of the retromer CSC. Mediates the recruitment of the F-actin-capping protein dimer to the WASH core complex probably promoting localized F-actin polymerization needed for vesicle scission. Via its C-terminus binds various phospholipids, most strongly phosphatidylinositol 4-phosphate (PtdIns-(4)P), phosphatidylinositol 5-phosphate (PtdIns-(5)P) and phosphatidylinositol 3,5-bisphosphate (PtdIns-(3,5)P2). Involved in the endosome-to-plasma membrane trafficking and recycling of SNX27-retromer-dependent cargo proteins, such as GLUT1. Required for the association of DNAJC13, ENTR1, ANKRD50 with retromer CSC subunit VPS35. Required for the endosomal recruitment of CCC complex subunits COMMD1 and CCDC93 as well as the retriever complex subunit VPS35L. This chain is WASH complex subunit 2A, found in Homo sapiens (Human).